The chain runs to 316 residues: E3 ubiquitin-protein ligase rnf146 (316 aa).

An RING-type zinc finger spans residues 36-74; it reads CAICLQTCVHPVSLPCKHIFCYLCVKGASWLGRRCALCR. The region spanning 91–167 is the WWE domain; sequence EELKSASRGN…EHGRRRKIKR (77 aa). Positions 107, 110, 114, 144, 153, 163, and 175 each coordinate a glycoprotein. The tract at residues 257–316 is disordered; the sequence is GRNNIGEGEEGQPLINARMPAPSALLEESEPSDSNDHGSPTLQHNSLLVPQSNRLPFGNP. Polar residues predominate over residues 293 to 310; that stretch reads HGSPTLQHNSLLVPQSNR.

It localises to the cytoplasm. It is found in the cytosol. The protein resides in the nucleus. The catalysed reaction is S-ubiquitinyl-[E2 ubiquitin-conjugating enzyme]-L-cysteine + [acceptor protein]-L-lysine = [E2 ubiquitin-conjugating enzyme]-L-cysteine + N(6)-ubiquitinyl-[acceptor protein]-L-lysine.. The protein operates within protein modification; protein ubiquitination. Its function is as follows. E3 ubiquitin-protein ligase that specifically binds poly-ADP-ribosylated proteins and mediates their ubiquitination and subsequent degradation. May regulate many important biological processes, such as cell survival and DNA damage response. Acts as an activator of the Wnt signaling pathway by mediating the ubiquitination of poly-ADP-ribosylated proteins. Neuroprotective protein. Protects against cell death induced by DNA damaging agents and rescues cells from G1 arrest. Promotes cell survival after gamma-irradiation. Facilitates DNA repair. In Xenopus tropicalis (Western clawed frog), this protein is E3 ubiquitin-protein ligase rnf146 (rnf146).